We begin with the raw amino-acid sequence, 502 residues long: Chromatin structure-remodeling complex protein RSC58 (502 aa).

In terms of domain architecture, Bromo spans 19–134; sequence SILNAASVKC…KFSSELLLRE (116 aa). The segment at 336–378 is disordered; it reads NEEGINRKQNDENNKNVDGKSNGVQDDGGDNDNDATIASANSE. The segment covering 339 to 353 has biased composition (basic and acidic residues); it reads GINRKQNDENNKNVD.

As to quaternary structure, component of the two forms of the RSC complex composed of at least either RSC1 or RSC2, and ARP7, ARP9, LDB7, NPL6, RSC3, RSC30, RSC4, RSC58, RSC6, RSC8, RSC9, SFH1, STH1, HTL1 and probably RTT102. The complexes interact with histone and histone variant components of centromeric chromatin.

The protein resides in the nucleus. In terms of biological role, component of the chromatin structure-remodeling complex (RSC), which is involved in transcription regulation and nucleosome positioning. RSC is responsible for the transfer of a histone octamer from a nucleosome core particle to naked DNA. The reaction requires ATP and involves an activated RSC-nucleosome intermediate. Remodeling reaction also involves DNA translocation, DNA twist and conformational change. As a reconfigurer of centromeric and flanking nucleosomes, RSC complex is required both for proper kinetochore function in chromosome segregation and, via a PKC1-dependent signaling pathway, for organization of the cellular cytoskeleton. The protein is Chromatin structure-remodeling complex protein RSC58 (RSC58) of Saccharomyces cerevisiae (strain ATCC 204508 / S288c) (Baker's yeast).